The sequence spans 169 residues: Crossover junction endodeoxyribonuclease RuvC (169 aa).

Catalysis depends on residues Asp-12, Glu-72, and Asp-144. Positions 12, 72, and 144 each coordinate Mg(2+).

It belongs to the RuvC family. In terms of assembly, homodimer which binds Holliday junction (HJ) DNA. The HJ becomes 2-fold symmetrical on binding to RuvC with unstacked arms; it has a different conformation from HJ DNA in complex with RuvA. In the full resolvosome a probable DNA-RuvA(4)-RuvB(12)-RuvC(2) complex forms which resolves the HJ. Mg(2+) serves as cofactor.

Its subcellular location is the cytoplasm. The enzyme catalyses Endonucleolytic cleavage at a junction such as a reciprocal single-stranded crossover between two homologous DNA duplexes (Holliday junction).. Functionally, the RuvA-RuvB-RuvC complex processes Holliday junction (HJ) DNA during genetic recombination and DNA repair. Endonuclease that resolves HJ intermediates. Cleaves cruciform DNA by making single-stranded nicks across the HJ at symmetrical positions within the homologous arms, yielding a 5'-phosphate and a 3'-hydroxyl group; requires a central core of homology in the junction. The consensus cleavage sequence is 5'-(A/T)TT(C/G)-3'. Cleavage occurs on the 3'-side of the TT dinucleotide at the point of strand exchange. HJ branch migration catalyzed by RuvA-RuvB allows RuvC to scan DNA until it finds its consensus sequence, where it cleaves and resolves the cruciform DNA. The polypeptide is Crossover junction endodeoxyribonuclease RuvC (Xanthobacter autotrophicus (strain ATCC BAA-1158 / Py2)).